The sequence spans 215 residues: Pyridoxine/pyridoxamine 5'-phosphate oxidase (215 aa).

Substrate contacts are provided by residues 9-12 and K69; that span reads RRDY. Residues 64–69, 79–80, K86, and Q108 contribute to the FMN site; these read RVLLLK and FT. Residues Y126, R130, and S134 each coordinate substrate. FMN is bound by residues 143-144 and W188; that span reads QS. 194–196 contacts substrate; sequence RLH. R198 is an FMN binding site.

It belongs to the pyridoxamine 5'-phosphate oxidase family. As to quaternary structure, homodimer. It depends on FMN as a cofactor.

The catalysed reaction is pyridoxamine 5'-phosphate + O2 + H2O = pyridoxal 5'-phosphate + H2O2 + NH4(+). It catalyses the reaction pyridoxine 5'-phosphate + O2 = pyridoxal 5'-phosphate + H2O2. Its pathway is cofactor metabolism; pyridoxal 5'-phosphate salvage; pyridoxal 5'-phosphate from pyridoxamine 5'-phosphate: step 1/1. The protein operates within cofactor metabolism; pyridoxal 5'-phosphate salvage; pyridoxal 5'-phosphate from pyridoxine 5'-phosphate: step 1/1. Functionally, catalyzes the oxidation of either pyridoxine 5'-phosphate (PNP) or pyridoxamine 5'-phosphate (PMP) into pyridoxal 5'-phosphate (PLP). In Pseudomonas entomophila (strain L48), this protein is Pyridoxine/pyridoxamine 5'-phosphate oxidase.